Here is a 380-residue protein sequence, read N- to C-terminus: GATOR1 complex protein NPRL2 (380 aa).

The interval 1 to 133 (MGSGCRIECI…SKQKLVPIMT (133 aa)) is interaction with PDPK1. Arg78 contributes to the GDP binding site. Arg78 is modified (asymmetric dimethylarginine). Residues Lys158 and Lys357 each participate in a glycyl lysine isopeptide (Lys-Gly) (interchain with G-Cter in ubiquitin) cross-link.

Belongs to the NPR2 family. Within the GATOR complex, component of the GATOR1 subcomplex, made of DEPDC5, NPRL2 and NPRL3. GATOR1 mediates the strong interaction of the GATOR complex with small GTPases Rag (RagA/RRAGA, RagB/RRAGB, RagC/RRAGC and/or RagD/RRAGD) heterodimers. GATOR1 interacts with GPR155/LYCHOS; interaction takes place in presence of cholesterol and prevents interaction between GATOR1 and KICSTOR. Interacts with PDPK1. In the presence of abundant amino acids, ubiquitinated at Lys-158 and Lys-357 via 'Lys-6'-linked ubiquitination by the WDR24 component of the GATOR2 complex, thereby inhibiting the GATOR1 complex and promoting mTORC1 activation. Post-translationally, asymmetric dimethylation at Arg-78 by PRMT1 inhibits the GTPase activator activity of the GATOR1 complex and consequently inducing timely mTORC1 activation under methionine-sufficient conditions. In terms of tissue distribution, most abundant in skeletal muscle, followed by brain, liver and pancreas, with lower amounts in lung, kidney, placenta and heart. Expressed in the frontal lobe cortex as well as in the temporal, parietal, and occipital lobes. Expressed in most lung cancer cell lines tested.

It is found in the lysosome membrane. Functionally, catalytic component of the GATOR1 complex, a multiprotein complex that functions as an inhibitor of the amino acid-sensing branch of the mTORC1 pathway. In response to amino acid depletion, the GATOR1 complex has GTPase activating protein (GAP) activity and strongly increases GTP hydrolysis by RagA/RRAGA (or RagB/RRAGB) within heterodimeric Rag complexes, thereby turning them into their inactive GDP-bound form, releasing mTORC1 from lysosomal surface and inhibiting mTORC1 signaling. In the presence of abundant amino acids, the GATOR1 complex is ubiquitinated and inhibited by GATOR2. Within the GATOR1 complex, NPRL2 constitutes the catalytic subunit that mediates the GTPase activator activity and under methionine-sufficient conditions, the GTPase activator activity is inhibited by PRMT1 through methylation and consequently inducing timely mTORC1 activation. In terms of biological role, suppresses Src-dependent tyrosine phosphorylation and activation of PDPK1 and its downstream signaling. Down-regulates PDPK1 kinase activity by interfering with tyrosine phosphorylation at 'Tyr-9', 'Tyr-373' and 'Tyr-376' residues. May act as a tumor suppressor. Suppresses cell growth and enhances sensitivity to various anticancer drugs. The sequence is that of GATOR1 complex protein NPRL2 from Homo sapiens (Human).